A 359-amino-acid polypeptide reads, in one-letter code: Phospho-N-acetylmuramoyl-pentapeptide-transferase (359 aa).

The next 10 helical transmembrane spans lie at 3–23, 55–75, 84–104, 117–137, 156–176, 190–210, 231–251, 255–275, 283–303, and 330–350; these read QILI…PVLI, VAII…GVLM, GLLV…DDLI, TAKT…ALQF, IATV…VVSA, LAAG…FWQF, LAII…WNAA, IFMG…LSVT, VVLG…ILAF, and VIIR…ALFY.

Belongs to the glycosyltransferase 4 family. MraY subfamily. Mg(2+) is required as a cofactor.

The protein localises to the cell membrane. The enzyme catalyses UDP-N-acetyl-alpha-D-muramoyl-L-alanyl-gamma-D-glutamyl-meso-2,6-diaminopimeloyl-D-alanyl-D-alanine + di-trans,octa-cis-undecaprenyl phosphate = di-trans,octa-cis-undecaprenyl diphospho-N-acetyl-alpha-D-muramoyl-L-alanyl-D-glutamyl-meso-2,6-diaminopimeloyl-D-alanyl-D-alanine + UMP. It participates in cell wall biogenesis; peptidoglycan biosynthesis. Functionally, catalyzes the initial step of the lipid cycle reactions in the biosynthesis of the cell wall peptidoglycan: transfers peptidoglycan precursor phospho-MurNAc-pentapeptide from UDP-MurNAc-pentapeptide onto the lipid carrier undecaprenyl phosphate, yielding undecaprenyl-pyrophosphoryl-MurNAc-pentapeptide, known as lipid I. This chain is Phospho-N-acetylmuramoyl-pentapeptide-transferase, found in Mycolicibacterium gilvum (strain PYR-GCK) (Mycobacterium gilvum (strain PYR-GCK)).